A 1677-amino-acid chain; its full sequence is Zinc finger protein 831 (1677 aa).

Residues 1–26 show a composition bias toward pro residues; sequence MEVPEPTCPAPPARDQPAPTPGPPGA. The segment at 1–43 is disordered; sequence MEVPEPTCPAPPARDQPAPTPGPPGAPGGQASPHLTLGPVLLP. C2H2-type zinc fingers lie at residues 144–166 and 172–196; these read YLCP…IRSH and FPCA…TQTH. Disordered regions lie at residues 193-250, 270-398, 516-557, 663-931, 950-1062, 1100-1119, 1137-1176, 1216-1243, 1510-1597, and 1620-1677; these read TQTH…SPGA, GSAF…AGLE, WLEP…PSGH, EAAG…VLSA, TPLP…TCEA, NWEL…SGPL, LTRP…PFPS, LRDE…GPAQ, SAES…GQYG, and LITR…VIEI. Composition is skewed to basic and acidic residues over residues 216-232 and 325-341; these read EGDK…RGES and KPWD…KCES. The span at 376–385 shows a compositional bias: gly residues; it reads EGGPGPGPGV. A coiled-coil region spans residues 391–423; that stretch reads GAREAGLELEKKRLEERIAQLISHNQAVVDDAQ. Basic and acidic residues-rich tracts occupy residues 517–526, 674–684, 707–727, and 813–834; these read LEPREPRDPW, QDRRTPVHEDI, PTKH…RVEE, and SGED…HSWK. Low complexity-rich tracts occupy residues 880 to 894 and 905 to 919; these read LESS…SVAL and PLHP…HPSL. Residues 1153 to 1170 show a composition bias toward low complexity; sequence SSHSGTSRSHSTRSPHST. The segment covering 1518–1531 has biased composition (polar residues); sequence QTAGRTLTSSSPDS. Residues 1649-1662 show a composition bias toward basic and acidic residues; that stretch reads RSLEGMRKQTRVEF.

This is Zinc finger protein 831 (ZNF831) from Homo sapiens (Human).